Consider the following 299-residue polypeptide: Epimerase family protein SH2119 (299 aa).

It belongs to the NAD(P)-dependent epimerase/dehydratase family. SDR39U1 subfamily.

The polypeptide is Epimerase family protein SH2119 (Staphylococcus haemolyticus (strain JCSC1435)).